The following is a 760-amino-acid chain: Serine/threonine-protein kinase Haspin homolog ALK1 (760 aa).

A phosphoserine mark is found at S76 and S79. 4 disordered regions span residues 76 to 100 (SDAS…KKRW), 123 to 153 (SSFT…SSLD), 187 to 264 (DDIS…STVS), and 362 to 408 (KRNS…CSYS). Positions 78-95 (ASLNVTTGNNTSRKTTSN) are enriched in polar residues. Positions 200–202 (KEN) match the KEN box motif. Positions 209-220 (KKNSSIASTSSE) are enriched in polar residues. A D box motif is present at residues 224–232 (RTPLKPLVN). The span at 237-250 (PTSQPQQQQPLYNA) shows a compositional bias: polar residues. Over residues 251 to 264 (SLSSRRSSISSTVS) the composition is skewed to low complexity. Residues 362 to 386 (KRNSQSSLKHKSSHASLQKFKRNKG) show a composition bias toward basic residues. The span at 398 to 408 (NSSNDDSCSYS) shows a compositional bias: low complexity. The Protein kinase domain maps to 468-760 (NCDIKRILNP…NTGDLLKLYK (293 aa)). ATP contacts are provided by residues 474–482 (ILNPAKGDV) and K510.

It belongs to the protein kinase superfamily. Ser/Thr protein kinase family. Haspin subfamily. In terms of processing, periodically phosphorylated during the cell cycle with a phosphorylation peak during mitosis and hyperphosphorylated after DNA damage.

The catalysed reaction is L-seryl-[protein] + ATP = O-phospho-L-seryl-[protein] + ADP + H(+). It catalyses the reaction L-threonyl-[protein] + ATP = O-phospho-L-threonyl-[protein] + ADP + H(+). Functionally, serine/threonine haspin-like protein kinase involved in cell cycle regulation. This Saccharomyces cerevisiae (strain ATCC 204508 / S288c) (Baker's yeast) protein is Serine/threonine-protein kinase Haspin homolog ALK1 (ALK1).